The sequence spans 386 residues: GTPase Obg (386 aa).

The Obg domain maps to 4 to 162 (SNFVDYVKIY…MTVILELKLL (159 aa)). The interval 18-45 (KGGRGSTHMRREKYTPNGGPDGGDGGRG) is disordered. Residues 36-45 (GPDGGDGGRG) show a composition bias toward gly residues. Positions 163–329 (ADVGLVGFPN…LKDILWTELN (167 aa)) constitute an OBG-type G domain. GTP is bound by residues 169-176 (GFPNAGKS), 194-198 (FTTLE), 216-219 (DIPG), 283-286 (TKSD), and 310-312 (SSV). Mg(2+) is bound by residues Ser-176 and Thr-196. A disordered region spans residues 351 to 386 (ELKDMGEDEELDYEYEDDGDEDDLDYEYEEEDWEDK). Acidic residues predominate over residues 356–386 (GEDEELDYEYEDDGDEDDLDYEYEEEDWEDK).

Belongs to the TRAFAC class OBG-HflX-like GTPase superfamily. OBG GTPase family. In terms of assembly, monomer. Mg(2+) is required as a cofactor.

The protein localises to the cytoplasm. In terms of biological role, an essential GTPase which binds GTP, GDP and possibly (p)ppGpp with moderate affinity, with high nucleotide exchange rates and a fairly low GTP hydrolysis rate. Plays a role in control of the cell cycle, stress response, ribosome biogenesis and in those bacteria that undergo differentiation, in morphogenesis control. This Bacteroides fragilis (strain YCH46) protein is GTPase Obg.